Consider the following 234-residue polypeptide: Ubiquinone biosynthesis O-methyltransferase (234 aa).

Residues Arg40, Gly59, Asp80, and Met123 each contribute to the S-adenosyl-L-methionine site.

This sequence belongs to the methyltransferase superfamily. UbiG/COQ3 family.

It catalyses the reaction a 3-demethylubiquinol + S-adenosyl-L-methionine = a ubiquinol + S-adenosyl-L-homocysteine + H(+). It carries out the reaction a 3-(all-trans-polyprenyl)benzene-1,2-diol + S-adenosyl-L-methionine = a 2-methoxy-6-(all-trans-polyprenyl)phenol + S-adenosyl-L-homocysteine + H(+). It functions in the pathway cofactor biosynthesis; ubiquinone biosynthesis. Its function is as follows. O-methyltransferase that catalyzes the 2 O-methylation steps in the ubiquinone biosynthetic pathway. The protein is Ubiquinone biosynthesis O-methyltransferase of Coxiella burnetii (strain CbuK_Q154) (Coxiella burnetii (strain Q154)).